A 342-amino-acid chain; its full sequence is Anthranilate phosphoribosyltransferase (342 aa).

Residues glycine 90, 93–94, threonine 98, 100–103, 118–126, and serine 130 each bind 5-phospho-alpha-D-ribose 1-diphosphate; these read GS, NIST, and KHGNRRATS. Glycine 90 serves as a coordination point for anthranilate. Serine 102 is a Mg(2+) binding site. Asparagine 121 lines the anthranilate pocket. Arginine 176 contributes to the anthranilate binding site. Residues aspartate 235 and glutamate 236 each coordinate Mg(2+).

Belongs to the anthranilate phosphoribosyltransferase family. In terms of assembly, homodimer. The cofactor is Mg(2+).

It carries out the reaction N-(5-phospho-beta-D-ribosyl)anthranilate + diphosphate = 5-phospho-alpha-D-ribose 1-diphosphate + anthranilate. It functions in the pathway amino-acid biosynthesis; L-tryptophan biosynthesis; L-tryptophan from chorismate: step 2/5. In terms of biological role, catalyzes the transfer of the phosphoribosyl group of 5-phosphorylribose-1-pyrophosphate (PRPP) to anthranilate to yield N-(5'-phosphoribosyl)-anthranilate (PRA). The polypeptide is Anthranilate phosphoribosyltransferase (Rhodopirellula baltica (strain DSM 10527 / NCIMB 13988 / SH1)).